The primary structure comprises 158 residues: Putative metalloproteinase inhibitor tag-225 (158 aa).

An N-terminal signal peptide occupies residues 1 to 20 (MQNLSLSLVILSVLIAVTLA). Position 21 (cysteine 21) interacts with Zn(2+). The involved in metalloproteinase-binding stretch occupies residues 21 to 25 (CKCRE). Cystine bridges form between cysteine 21/cysteine 96, cysteine 23/cysteine 123, and cysteine 33/cysteine 158. The NTR domain occupies 21–158 (CKCREQSTKE…LQSQVKSIKC (138 aa)). Asparagine 79 carries N-linked (GlcNAc...) asparagine glycosylation. Residues 93-94 (AP) form an involved in metalloproteinase-binding region.

Belongs to the protease inhibitor I35 (TIMP) family.

It is found in the secreted. Complexes with metalloproteinases and irreversibly inactivates them by binding to their catalytic zinc cofactor. The polypeptide is Putative metalloproteinase inhibitor tag-225 (tag-225) (Caenorhabditis elegans).